The following is a 135-amino-acid chain: Putative nickel-responsive regulator (135 aa).

Ni(2+) is bound by residues His79, His90, His92, and Cys98.

It belongs to the transcriptional regulatory CopG/NikR family. Ni(2+) is required as a cofactor.

Transcriptional regulator. The sequence is that of Putative nickel-responsive regulator from Dictyoglomus turgidum (strain DSM 6724 / Z-1310).